The primary structure comprises 715 residues: Eukaryotic peptide chain release factor GTP-binding subunit (715 aa).

Polar residues predominate over residues 1–12 (MANASLNGDQSK). Disordered stretches follow at residues 1–148 (MANA…SLNK) and 168–262 (ATKK…SNSA). The segment at 5 to 128 (SLNGDQSKQQ…PQQQQQQQSQ (124 aa)) is several sort of repeats. A compositionally biased stretch (low complexity) spans 13–25 (QQQQQQQQQQQQQ). Residues 26–37 (NYYNPNAAQSFV) show a composition bias toward polar residues. Low complexity-rich tracts occupy residues 39-129 (QGGY…QSQG) and 176-198 (SKPQ…ASAP). The tract at residues 129–285 (GMSLADFQKQ…DEIDEEVVKD (157 aa)) is charged. 2 stretches are compositionally biased toward basic and acidic residues: residues 199 to 208 (QEEKKEEKEA) and 218 to 233 (ETKK…KKEA). The tr-type G domain maps to 290 to 515 (KDHVSIIFMG…YLDNMDTMNR (226 aa)). A G1 region spans residues 299–306 (GHVDAGKS). A GTP-binding site is contributed by 299 to 306 (GHVDAGKS). The G2 stretch occupies residues 355–359 (GKTIE). Position 373 is a phosphothreonine (Thr373). The interval 376-379 (DAPG) is G3. GTP is bound by residues 376-380 (DAPGH) and 438-441 (NKMD). Residues 438–441 (NKMD) are G4. The tract at residues 479-481 (SGY) is G5.

This sequence belongs to the TRAFAC class translation factor GTPase superfamily. Classic translation factor GTPase family. ERF3 subfamily.

The protein localises to the cytoplasm. Functionally, involved in translation termination. Stimulates the activity of ERF1. Binds guanine nucleotides. This is Eukaryotic peptide chain release factor GTP-binding subunit (SUP35) from Candida albicans (Yeast).